Consider the following 382-residue polypeptide: Na(+)/H(+) antiporter NhaA 2 (382 aa).

The next 11 membrane-spanning stretches (helical) occupy residues 8–28, 49–69, 87–107, 115–135, 146–166, 169–189, 209–229, 252–272, 286–306, 325–345, and 353–373; these read FFSSPAAGGIVLIIASAAAII, LSVEHWINDALMAVFFMMVGL, ALPGFAALGGMAVPAAIYVWF, LAGWAIPAATDIAFALGVLAL, IFLSALAILDDMGAVAIIALF, SNISFLMLAGAAVTVALLFIM, FFMLQSGVHATIAGILLALFI, WVTFLILPLFGFANAGVALSG, VALGLFVGKQAGIFGLSLLAV, VSVLCGIGFTMSLFIGNLAFA, and EVKVGVLAGSVLAALAGMLIL.

The protein belongs to the NhaA Na(+)/H(+) (TC 2.A.33) antiporter family.

It is found in the cell inner membrane. The enzyme catalyses Na(+)(in) + 2 H(+)(out) = Na(+)(out) + 2 H(+)(in). Its function is as follows. Na(+)/H(+) antiporter that extrudes sodium in exchange for external protons. This is Na(+)/H(+) antiporter NhaA 2 from Klebsiella pneumoniae subsp. pneumoniae (strain ATCC 700721 / MGH 78578).